Consider the following 431-residue polypeptide: Glucose-1-phosphate adenylyltransferase (431 aa).

K39 is a binding site for beta-D-fructose 1,6-bisphosphate. Residues R40, H46, and R52 each coordinate AMP. Position 114 (Y114) interacts with alpha-D-glucose 1-phosphate. R130 contributes to the AMP binding site. Residues G179, 194–195, and S212 each bind alpha-D-glucose 1-phosphate; that span reads EK. AMP-binding residues include E370 and R386. Residues 419–423 and 429–431 each bind beta-D-fructose 1,6-bisphosphate; these read REMLR and QER.

The protein belongs to the bacterial/plant glucose-1-phosphate adenylyltransferase family. Homotetramer.

It carries out the reaction alpha-D-glucose 1-phosphate + ATP + H(+) = ADP-alpha-D-glucose + diphosphate. It functions in the pathway glycan biosynthesis; glycogen biosynthesis. With respect to regulation, allosterically activated by fructose-1,6-bisphosphate (F16BP) and inhibited by AMP. Its function is as follows. Involved in the biosynthesis of ADP-glucose, a building block required for the elongation reactions to produce glycogen. Catalyzes the reaction between ATP and alpha-D-glucose 1-phosphate (G1P) to produce pyrophosphate and ADP-Glc. The protein is Glucose-1-phosphate adenylyltransferase of Salmonella arizonae (strain ATCC BAA-731 / CDC346-86 / RSK2980).